We begin with the raw amino-acid sequence, 576 residues long: Sodium/hydrogen exchanger 8 (576 aa).

11 helical membrane passes run 55–75, 79–99, 118–138, 151–171, 186–206, 256–276, 306–326, 349–369, 374–394, 412–432, and 446–466; these read MTIF…HLLI, LHFL…GAVI, PNMF…YSLH, LFAV…IYFL, FAFG…IFNA, LGYF…TGLI, GLAE…GIVM, VAFL…FSFP, ISFV…NIFP, MFIM…SLHL, and TTIV…MPLI. The residue at position 505 (T505) is a Phosphothreonine. A phosphoserine mark is found at S566 and S568.

Belongs to the monovalent cation:proton antiporter 1 (CPA1) transporter (TC 2.A.36) family. As to expression, predominantly expressed in the liver, skeletal muscle, kidney, and testis. Expressed in both renal cortex and medulla. Detected throughout the entire gastrointestinal tract, with high expression detected in stomach, duodenum and ascending colon. In gastric epithelium; expressed in the glands within the fundus and pylorus regions.

It is found in the golgi apparatus membrane. It localises to the golgi apparatus. The protein localises to the trans-Golgi network membrane. The protein resides in the endosome. Its subcellular location is the multivesicular body membrane. It is found in the apical cell membrane. It localises to the cytoplasmic vesicle. The protein localises to the secretory vesicle. The protein resides in the acrosome. The enzyme catalyses Na(+)(in) + H(+)(out) = Na(+)(out) + H(+)(in). Na(+)/H(+) antiporter. Mediates the electoneutral exchange of intracellular H(+) ions for extracellular Na(+) in 1:1 stoichiometry. Acts as an Na(+)/H(+) exchanger in the trans-Golgi. Contributes to the regulation of pH regulation of Golgi apparatus, and consequently, in protein trafficking and endosomal morphology. Plays a crucial role in germ cells in acrosome biogenesis and sperm development, probably by playing a role in the fusion of the Golgi-derived vesicles that form the acrosomal cap. Can also be active at the cell surface of specialized cells. In the small intestine, plays a major physiological role in transepithelial absorption of Na(+). Regulates intracellular pH homeostasis of intestinal epithelial cells. Acts as an important regulator of mucosal integrity in the intestine and in the stomach, could mediate the pH fluctuation necessary for mucin exocytosis or assist membrane trafficking of other proteins. Plays a role in photoreceptor survival and in the maintenance of intracellular pH homeostasis in retinal pigment epithelium (RPE cells). The chain is Sodium/hydrogen exchanger 8 (Slc9a8) from Mus musculus (Mouse).